The primary structure comprises 173 residues: SKP1-like protein 1 (173 aa).

Residues I115–E173 are interaction with the F-box domain of F-box proteins.

Belongs to the SKP1 family. Part of a SCF (SKP1-CUL1-F-box protein) E3 ubiquitin-protein ligase complex. Interacts directly with MOF (via F-box domain). Interacts with rice black streaked dwarf virus RBSDV protein P7-2. Is able to form the SCF complex together with CUL1 and the viral P7-2 protein. Interacts with D3.

The protein localises to the nucleus. The protein operates within protein modification; protein ubiquitination. In terms of biological role, involved in ubiquitination and subsequent proteasomal degradation of target proteins. Together with CUL1, a RING-box and a F-box protein, it forms a SCF E3 ubiquitin ligase complex. The functional specificity of this complex depends on the type of F-box protein. In the SCF complex, it serves as an adapter that links the F-box protein to CUL1. In Oryza sativa subsp. japonica (Rice), this protein is SKP1-like protein 1.